Consider the following 193-residue polypeptide: Protein GrpE (193 aa).

Residues 1-40 (MTEENRPQPDQPELTVTSESSVQETGENKARTPEQEGEAM) form a disordered region. Residues 14-25 (LTVTSESSVQET) are compositionally biased toward polar residues.

Belongs to the GrpE family. In terms of assembly, homodimer.

The protein resides in the cytoplasm. Participates actively in the response to hyperosmotic and heat shock by preventing the aggregation of stress-denatured proteins, in association with DnaK and GrpE. It is the nucleotide exchange factor for DnaK and may function as a thermosensor. Unfolded proteins bind initially to DnaJ; upon interaction with the DnaJ-bound protein, DnaK hydrolyzes its bound ATP, resulting in the formation of a stable complex. GrpE releases ADP from DnaK; ATP binding to DnaK triggers the release of the substrate protein, thus completing the reaction cycle. Several rounds of ATP-dependent interactions between DnaJ, DnaK and GrpE are required for fully efficient folding. The chain is Protein GrpE from Nitrosospira multiformis (strain ATCC 25196 / NCIMB 11849 / C 71).